A 164-amino-acid polypeptide reads, in one-letter code: MPPRSLTLSRLPVAALGLPFSSCSPPPPRLRFPFAARRARSLATRASSSSPDSSFGSRMEDSVKRTLADNPVVIYSKSWCSYSMEVKALFKRIGVQPHVIELDQLGAQGPQLQKVLERLTGQSTVPNVFIGGKHIGGCTDTVKLHRKGELATMLSELDIDVNNS.

The 102-residue stretch at 60 to 161 folds into the Glutaredoxin domain; it reads EDSVKRTLAD…TMLSELDIDV (102 aa). Cys80 is a binding site for [2Fe-2S] cluster.

It belongs to the glutaredoxin family. CPYC subfamily.

It is found in the cytoplasm. In terms of biological role, may only reduce GSH-thiol disulfides, but not protein disulfides. This is Monothiol glutaredoxin-S10 (GRXS10) from Oryza sativa subsp. japonica (Rice).